The following is a 59-amino-acid chain: Large ribosomal subunit protein uL30 (59 aa).

The protein belongs to the universal ribosomal protein uL30 family. In terms of assembly, part of the 50S ribosomal subunit.

This chain is Large ribosomal subunit protein uL30, found in Staphylococcus saprophyticus subsp. saprophyticus (strain ATCC 15305 / DSM 20229 / NCIMB 8711 / NCTC 7292 / S-41).